Consider the following 224-residue polypeptide: Tumor protein D52 (224 aa).

Phosphoserine occurs at positions 36 and 40. The stretch at 62–114 (AATISATETLSEEEQEELRRELAKVEEEIQTLSQVLAAKEKHLAEIKRKLGIN) forms a coiled coil. Ser-176 bears the Phosphoserine mark. The disordered stretch occupies residues 187–224 (KVGGTKPAGGDFGEVLNSAANASATTTEPLPEKTQESL). Residues 203 to 213 (NSAANASATTT) show a composition bias toward low complexity. Ser-223 carries the post-translational modification Phosphoserine.

It belongs to the TPD52 family. In terms of assembly, forms a homodimer or heterodimer with other members of the family. All isoforms interact with several 14-3-3 proteins. Isoform 2 is expressed in colon, breast, prostate, pancreas and kidney tumor cell lines. Isoform 2 is expressed at high levels in kidney, prostate, brain, small intestine and pancreas, at moderate levels in placenta and colon, at low levels in lung, liver and heart, and at very low levels in spleen, thymus, peripheral mononuclear blood cells, testis and ovary.

The chain is Tumor protein D52 (TPD52) from Homo sapiens (Human).